The sequence spans 609 residues: Phosphoenolpyruvate carboxykinase [GTP] (609 aa).

Substrate is bound by residues R81 and 220-222; that span reads YGG. Mn(2+) contacts are provided by K229 and H249. S271 serves as a coordination point for substrate. 272 to 277 contacts GTP; sequence ACGKTN. C273 is a catalytic residue. Mn(2+) is bound at residue D296. 387-389 contacts substrate; the sequence is NSR. GTP is bound by residues R389, R420, and 515–518; that span reads FGEN.

Belongs to the phosphoenolpyruvate carboxykinase [GTP] family. In terms of assembly, monomer. The cofactor is Mn(2+).

It localises to the cytoplasm. The enzyme catalyses oxaloacetate + GTP = phosphoenolpyruvate + GDP + CO2. The protein operates within carbohydrate biosynthesis; gluconeogenesis. Catalyzes the conversion of oxaloacetate (OAA) to phosphoenolpyruvate (PEP), the rate-limiting step in the metabolic pathway that produces glucose from lactate and other precursors derived from the citric acid cycle. This Mycolicibacterium paratuberculosis (strain ATCC BAA-968 / K-10) (Mycobacterium paratuberculosis) protein is Phosphoenolpyruvate carboxykinase [GTP].